Here is a 152-residue protein sequence, read N- to C-terminus: UPF0266 membrane protein YobD (152 aa).

Helical transmembrane passes span 6-26 (LVLI…QFIM), 45-65 (VDSV…VTSH), and 67-87 (AQMT…IFWI).

The protein belongs to the UPF0266 family.

The protein resides in the cell inner membrane. In Salmonella paratyphi B (strain ATCC BAA-1250 / SPB7), this protein is UPF0266 membrane protein YobD.